Reading from the N-terminus, the 383-residue chain is 1-deoxy-D-xylulose 5-phosphate reductoisomerase (383 aa).

Threonine 10, glycine 11, serine 12, isoleucine 13, and asparagine 123 together coordinate NADPH. Residue lysine 124 coordinates 1-deoxy-D-xylulose 5-phosphate. Residue glutamate 125 participates in NADPH binding. Residue aspartate 149 coordinates Mn(2+). Residues serine 150, glutamate 151, serine 175, and histidine 198 each coordinate 1-deoxy-D-xylulose 5-phosphate. Position 151 (glutamate 151) interacts with Mn(2+). Glycine 204 contributes to the NADPH binding site. Positions 211, 216, 217, and 220 each coordinate 1-deoxy-D-xylulose 5-phosphate. Residue glutamate 220 coordinates Mn(2+).

This sequence belongs to the DXR family. Requires Mg(2+) as cofactor. Mn(2+) is required as a cofactor.

The enzyme catalyses 2-C-methyl-D-erythritol 4-phosphate + NADP(+) = 1-deoxy-D-xylulose 5-phosphate + NADPH + H(+). Its pathway is isoprenoid biosynthesis; isopentenyl diphosphate biosynthesis via DXP pathway; isopentenyl diphosphate from 1-deoxy-D-xylulose 5-phosphate: step 1/6. Its function is as follows. Catalyzes the NADPH-dependent rearrangement and reduction of 1-deoxy-D-xylulose-5-phosphate (DXP) to 2-C-methyl-D-erythritol 4-phosphate (MEP). The chain is 1-deoxy-D-xylulose 5-phosphate reductoisomerase from Desulfosudis oleivorans (strain DSM 6200 / JCM 39069 / Hxd3) (Desulfococcus oleovorans).